The chain runs to 265 residues: Probable autolysin SsaALP (265 aa).

An N-terminal signal peptide occupies residues 1–25; sequence MKKLAFAITATSGAAAFLTHHDAQA. 2 consecutive LysM domains span residues 27-70 and 89-132; these read TQHT…VISV and SSHT…TLQI. The disordered stretch occupies residues 72-92; the sequence is GSDAQNTSNTSPQAGSASSHT. Polar residues predominate over residues 74 to 92; that stretch reads DAQNTSNTSPQAGSASSHT. The 125-residue stretch at 141–265 folds into the Peptidase C51 domain; it reads TPTATTGSNG…SEVSSYAFIH (125 aa).

The catalysed reaction is Hydrolyzes the link between N-acetylmuramoyl residues and L-amino acid residues in certain cell-wall glycopeptides.. In terms of biological role, has weak lytic activity toward S.aureus cells. The polypeptide is Probable autolysin SsaALP (Staphylococcus aureus (strain NCTC 8325 / PS 47)).